We begin with the raw amino-acid sequence, 360 residues long: Serine/threonine-protein phosphatase 2A activator 2 (360 aa).

This sequence belongs to the PTPA-type PPIase family.

It is found in the cytoplasm. It carries out the reaction [protein]-peptidylproline (omega=180) = [protein]-peptidylproline (omega=0). Functionally, PPIases accelerate the folding of proteins. It catalyzes the cis-trans isomerization of proline imidic peptide bonds in oligopeptides. Acts as a regulatory subunit for PP2A-like phosphatases modulating their activity or substrate specificity, probably by inducing a conformational change in the catalytic subunit, a direct target of the PPIase. Can reactivate inactive phosphatase PP2A-phosphatase methylesterase complexes (PP2Ai) in presence of ATP and Mg(2+) by dissociating the inactive form from the complex. The protein is Serine/threonine-protein phosphatase 2A activator 2 (RRD2) of Kluyveromyces lactis (strain ATCC 8585 / CBS 2359 / DSM 70799 / NBRC 1267 / NRRL Y-1140 / WM37) (Yeast).